A 230-amino-acid chain; its full sequence is 6-carboxyhexanoate--CoA ligase (230 aa).

Belongs to the BioW family. In terms of assembly, homodimer. Requires Mg(2+) as cofactor.

The catalysed reaction is heptanedioate + ATP + CoA = 6-carboxyhexanoyl-CoA + AMP + diphosphate. The protein operates within metabolic intermediate metabolism; pimeloyl-CoA biosynthesis; pimeloyl-CoA from pimelate: step 1/1. Functionally, catalyzes the transformation of pimelate into pimeloyl-CoA with concomitant hydrolysis of ATP to AMP. In Staphylococcus aureus (strain MSSA476), this protein is 6-carboxyhexanoate--CoA ligase.